We begin with the raw amino-acid sequence, 252 residues long: Probable transcriptional regulatory protein Moth_1704 (252 aa).

This sequence belongs to the TACO1 family.

The protein resides in the cytoplasm. This Moorella thermoacetica (strain ATCC 39073 / JCM 9320) protein is Probable transcriptional regulatory protein Moth_1704.